The primary structure comprises 167 residues: Zymogen granule membrane protein 16 (167 aa).

The N-terminal stretch at 1-16 (MLTVALLALLCASASG) is a signal peptide. A Jacalin-type lectin domain is found at 24–159 (SSYSGEYGGG…IDAIGLHWDV (136 aa)).

It belongs to the jacalin lectin family. Highly expressed in liver. Detected at lower levels in colon, ileum and jejunum.

The protein localises to the secreted. It localises to the extracellular space. It is found in the extracellular matrix. The protein resides in the zymogen granule lumen. Its subcellular location is the golgi apparatus lumen. Its function is as follows. May play a role in protein trafficking. May act as a linker molecule between the submembranous matrix on the luminal side of zymogen granule membrane (ZGM) and aggregated secretory proteins during granule formation in the TGN. The protein is Zymogen granule membrane protein 16 (ZG16) of Homo sapiens (Human).